A 341-amino-acid polypeptide reads, in one-letter code: Tetraacyldisaccharide 4'-kinase (341 aa).

ATP is bound at residue 54–61; it reads TVGGAGKT.

Belongs to the LpxK family.

It catalyses the reaction a lipid A disaccharide + ATP = a lipid IVA + ADP + H(+). It participates in glycolipid biosynthesis; lipid IV(A) biosynthesis; lipid IV(A) from (3R)-3-hydroxytetradecanoyl-[acyl-carrier-protein] and UDP-N-acetyl-alpha-D-glucosamine: step 6/6. In terms of biological role, transfers the gamma-phosphate of ATP to the 4'-position of a tetraacyldisaccharide 1-phosphate intermediate (termed DS-1-P) to form tetraacyldisaccharide 1,4'-bis-phosphate (lipid IVA). This chain is Tetraacyldisaccharide 4'-kinase, found in Brucella ovis (strain ATCC 25840 / 63/290 / NCTC 10512).